The primary structure comprises 141 residues: VLSEGNKKIIKNLLQKIHSQTEVLGAEALARLFECHPQTKSYFPKFSGFSANDKRVKHHGDLVLKALVDTNDHLDDLPHHLHKLAEKHGKDLLVDPHNFKLFSDCIAVTLAAHLQEKSPETHCAVDKFLEEVTYQLSSLYR.

Residues 1–141 (VLSEGNKKII…VTYQLSSLYR (141 aa)) enclose the Globin domain. Histidine 59 lines the O2 pocket. Histidine 88 contributes to the heme b binding site.

The protein belongs to the globin family. As to quaternary structure, heterotetramer of two alpha chains and two beta chains. Red blood cells.

Functionally, involved in oxygen transport from the lung to the various peripheral tissues. In Torpedo marmorata (Marbled electric ray), this protein is Hemoglobin subunit alpha-2.